The following is a 157-amino-acid chain: Small ribosomal subunit protein uS7 (157 aa).

It belongs to the universal ribosomal protein uS7 family. Part of the 30S ribosomal subunit. Contacts proteins S9 and S11.

One of the primary rRNA binding proteins, it binds directly to 16S rRNA where it nucleates assembly of the head domain of the 30S subunit. Is located at the subunit interface close to the decoding center, probably blocks exit of the E-site tRNA. This Paracidovorax citrulli (strain AAC00-1) (Acidovorax citrulli) protein is Small ribosomal subunit protein uS7.